Consider the following 155-residue polypeptide: MKIYEGKLISKNLKFGIVAGRFNEFIVSKLLSGAVDALKRHGCDEDSIELAWAPGAFEIPLISQKMAESGKYDAVICLGAVIRGATSHFDYVSSEVSKGIAQTSLKTGCPVIFGVLTTDNIEQAIERAGTKSGNKGFDAAVTAIEMANLIKTIGE.

Residues Phe-22, Ala-56–Glu-58, and Ala-80–Ile-82 each bind 5-amino-6-(D-ribitylamino)uracil. Position 85–86 (Ala-85–Thr-86) interacts with (2S)-2-hydroxy-3-oxobutyl phosphate. Catalysis depends on His-88, which acts as the Proton donor. Phe-113 is a binding site for 5-amino-6-(D-ribitylamino)uracil. A (2S)-2-hydroxy-3-oxobutyl phosphate-binding site is contributed by Arg-127.

It belongs to the DMRL synthase family.

The catalysed reaction is (2S)-2-hydroxy-3-oxobutyl phosphate + 5-amino-6-(D-ribitylamino)uracil = 6,7-dimethyl-8-(1-D-ribityl)lumazine + phosphate + 2 H2O + H(+). Its pathway is cofactor biosynthesis; riboflavin biosynthesis; riboflavin from 2-hydroxy-3-oxobutyl phosphate and 5-amino-6-(D-ribitylamino)uracil: step 1/2. Catalyzes the formation of 6,7-dimethyl-8-ribityllumazine by condensation of 5-amino-6-(D-ribitylamino)uracil with 3,4-dihydroxy-2-butanone 4-phosphate. This is the penultimate step in the biosynthesis of riboflavin. This Clostridium acetobutylicum (strain ATCC 824 / DSM 792 / JCM 1419 / IAM 19013 / LMG 5710 / NBRC 13948 / NRRL B-527 / VKM B-1787 / 2291 / W) protein is 6,7-dimethyl-8-ribityllumazine synthase.